Reading from the N-terminus, the 365-residue chain is DNA replication and repair protein RecF (365 aa).

Position 30–37 (30–37 (GDNAQGKT)) interacts with ATP.

This sequence belongs to the RecF family.

The protein resides in the cytoplasm. Functionally, the RecF protein is involved in DNA metabolism; it is required for DNA replication and normal SOS inducibility. RecF binds preferentially to single-stranded, linear DNA. It also seems to bind ATP. The chain is DNA replication and repair protein RecF from Alkaliphilus oremlandii (strain OhILAs) (Clostridium oremlandii (strain OhILAs)).